We begin with the raw amino-acid sequence, 389 residues long: Teichoic acid ribitol-phosphate primase (389 aa).

Belongs to the CDP-glycerol glycerophosphotransferase family.

It localises to the cell membrane. The enzyme catalyses 4-O-[(2R)-glycerylphospho]-N-acetyl-beta-D-mannosaminyl-(1-&gt;4)-N-acetyl-alpha-D-glucosaminyl di-trans,octa-cis-undecaprenyl diphosphate + CDP-L-ribitol = 4-O-[1-D-ribitylphospho-(2R)-1-glycerylphospho]-N-acetyl-beta-D-mannosaminyl-(1-&gt;4)-N-acetyl-alpha-D-glucosaminyl di-trans,octa-cis-undecaprenyl diphosphate + CMP + H(+). It functions in the pathway cell wall biogenesis; poly(ribitol phosphate) teichoic acid biosynthesis. Catalyzes the addition of a single ribitol phosphate unit onto the glycerol phosphate of the linkage unit, as a primer for polymerisation by TarL. The protein is Teichoic acid ribitol-phosphate primase (tarK) of Bacillus spizizenii (strain ATCC 23059 / NRRL B-14472 / W23) (Bacillus subtilis subsp. spizizenii).